A 98-amino-acid chain; its full sequence is MVDRKGKGFRRKTRDKLSKHPRQRGKLTITRILQKFNNNDKVAIVIEPSWHYGMPHPRYHGLVGTVVGKRGNCYEVELEFNGEKKLLIVHPAHLKKVG.

The segment at 1–23 (MVDRKGKGFRRKTRDKLSKHPRQ) is disordered. Over residues 7–23 (KGFRRKTRDKLSKHPRQ) the composition is skewed to basic residues.

This sequence belongs to the eukaryotic ribosomal protein eL21 family.

This Nanoarchaeum equitans (strain Kin4-M) protein is Large ribosomal subunit protein eL21.